A 239-amino-acid chain; its full sequence is ATP synthase subunit a (239 aa).

Helical transmembrane passes span I13–F33, F75–V95, D113–M133, G174–G194, and W208–Y230.

This sequence belongs to the ATPase A chain family. F-type ATPases have 2 components, CF(1) - the catalytic core - and CF(0) - the membrane proton channel. CF(1) has five subunits: alpha(3), beta(3), gamma(1), delta(1), epsilon(1). CF(0) has three main subunits: a(1), b(2) and c(9-12). The alpha and beta chains form an alternating ring which encloses part of the gamma chain. CF(1) is attached to CF(0) by a central stalk formed by the gamma and epsilon chains, while a peripheral stalk is formed by the delta and b chains.

The protein localises to the cell membrane. Its function is as follows. Key component of the proton channel; it plays a direct role in the translocation of protons across the membrane. The polypeptide is ATP synthase subunit a (Enterococcus faecalis (strain ATCC 700802 / V583)).